The following is a 1174-amino-acid chain: Creatine kinase, flagellar (1174 aa).

The segment covering 1–14 (MGCAASSQQTTATG) has biased composition (polar residues). Residues 1 to 62 (MGCAASSQQT…PFVEPDPNYP (62 aa)) are disordered. Low complexity predominate over residues 18–39 (AAGEKANPAPANNNPNAANKAE). The 87-residue stretch at 53 to 139 (PFVEPDPNYP…FDPTIDKRHN (87 aa)) folds into the Phosphagen kinase N-terminal 1 domain. One copy of the 1; approximate repeat lies at 61-414 (YPDLSKHNNY…EKALEKGSDI (354 aa)). One can recognise a Phosphagen kinase C-terminal 1 domain in the interval 166–408 (YVLSCRVRTG…KKLIELEKAL (243 aa)). ATP contacts are provided by residues 169-173 (SCRVR), His-232, Arg-277, and 333-337 (RAGVH). Positions 426-512 (RAEQVKEGYP…FDPVIDARHG (87 aa)) constitute a Phosphagen kinase N-terminal 2 domain. One copy of the 2; approximate repeat lies at 434 to 787 (YPDLSKHNNH…EKKLEKGEDI (354 aa)). Residues 539–781 (YVLSCRVRTG…ELLVQMEKKL (243 aa)) form the Phosphagen kinase C-terminal 2 domain. Residues 542–546 (SCRVR), His-605, Arg-706, 734–739 (RGTGGV), and Asp-749 each bind ATP. In terms of domain architecture, Phosphagen kinase N-terminal 3 spans 800 to 886 (PIKPFSYDYP…FDPVISARHG (87 aa)). The stretch at 808–1161 (YPDFSLHNNW…EKALMKGEDI (354 aa)) is one 3; approximate repeat. Positions 913–1155 (FVLSCRVRTG…KLLVNLEKAL (243 aa)) constitute a Phosphagen kinase C-terminal 3 domain.

This sequence belongs to the ATP:guanido phosphotransferase family. In terms of assembly, monomer.

Its subcellular location is the cytoplasm. It localises to the cytoskeleton. The protein localises to the flagellum axoneme. It catalyses the reaction creatine + ATP = N-phosphocreatine + ADP + H(+). Functionally, this axonemal protein participates in an energy shuttle that utilizes phosphocreatine to transfer the energy from ATP generated by the mitochondrion in the sperm head to dynein in the distal portions of the flagellum. The polypeptide is Creatine kinase, flagellar (Strongylocentrotus purpuratus (Purple sea urchin)).